The sequence spans 183 residues: Helofensin-2 (183 aa).

Positions methionine 1–glycine 26 are cleaved as a signal peptide. Residues alanine 27–alanine 64 form a C(6)C(4)C(9)C(6)CC 1; approximate repeat. A C(6)C(4)C(9)C(6)CC 2; approximate repeat occupies arginine 65–glutamine 101. Residues arginine 102 to lysine 139 form a C(6)C(4)C(9)C(6)CC 3; approximate repeat. The stretch at arginine 140–lysine 177 is one C(6)C(4)C(9)C(6)CC 4; approximate repeat.

This sequence belongs to the beta-defensin family. Helofensin subfamily. Expressed by the mandibular venom gland.

It localises to the secreted. Its function is as follows. Lethal toxin which possesses an inhibitory effect on direct electrical stimulation of the isolated hemi-diaphragm of mice. Neither hemorrhagic nor hemolytic activities are detected. Phospholipase A2 activity, proteolytic activity and arginine esterolytic activity are absent. The chain is Helofensin-2 from Heloderma suspectum cinctum (Banded Gila monster).